Consider the following 263-residue polypeptide: Shikimate dehydrogenase (NADP(+)) (263 aa).

Residues 14–16 (SLS) and Thr60 each bind shikimate. The active-site Proton acceptor is the Lys64. Shikimate-binding residues include Asn85 and Asp100. NADP(+)-binding positions include 123–127 (GAGGA), 146–151 (NRTPQR), and Leu205. Position 207 (Tyr207) interacts with shikimate. Gly228 lines the NADP(+) pocket.

The protein belongs to the shikimate dehydrogenase family. Homodimer.

The catalysed reaction is shikimate + NADP(+) = 3-dehydroshikimate + NADPH + H(+). The protein operates within metabolic intermediate biosynthesis; chorismate biosynthesis; chorismate from D-erythrose 4-phosphate and phosphoenolpyruvate: step 4/7. Functionally, involved in the biosynthesis of the chorismate, which leads to the biosynthesis of aromatic amino acids. Catalyzes the reversible NADPH linked reduction of 3-dehydroshikimate (DHSA) to yield shikimate (SA). This Thermus thermophilus (strain ATCC BAA-163 / DSM 7039 / HB27) protein is Shikimate dehydrogenase (NADP(+)).